The primary structure comprises 485 residues: Pyruvate kinase (485 aa).

Arg33 provides a ligand contact to substrate. Residues Asn35, Ser37, Asp67, and Thr68 each contribute to the K(+) site. Asn35–His38 contacts ATP. ATP-binding residues include Arg74 and Lys155. Residue Glu221 participates in Mg(2+) binding. Residues Gly244, Asp245, and Thr277 each contribute to the substrate site. Asp245 is a binding site for Mg(2+).

The protein belongs to the pyruvate kinase family. As to quaternary structure, homotetramer. Mg(2+) is required as a cofactor. It depends on K(+) as a cofactor.

The enzyme catalyses pyruvate + ATP = phosphoenolpyruvate + ADP + H(+). Its pathway is carbohydrate degradation; glycolysis; pyruvate from D-glyceraldehyde 3-phosphate: step 5/5. In Chlamydia trachomatis serovar D (strain ATCC VR-885 / DSM 19411 / UW-3/Cx), this protein is Pyruvate kinase (pyk).